The primary structure comprises 202 residues: Snake venom metalloproteinase Ac1 (202 aa).

The 197-residue stretch at 6 to 202 (RYMEIVIVVD…ENPPCILNKP (197 aa)) folds into the Peptidase M12B domain. Ca(2+)-binding residues include Glu9 and Asp93. 2 disulfides stabilise this stretch: Cys117/Cys197 and Cys157/Cys181. Residue His142 coordinates Zn(2+). Glu143 is an active-site residue. Zn(2+) contacts are provided by His146 and His152. Positions 197 and 200 each coordinate Ca(2+).

Belongs to the venom metalloproteinase (M12B) family. P-I subfamily. In terms of assembly, monomer. It depends on Zn(2+) as a cofactor. In terms of tissue distribution, expressed by the venom gland.

The protein resides in the secreted. Snake venom metalloproteinase that impairs hemostasis in the envenomed animal. This chain is Snake venom metalloproteinase Ac1, found in Deinagkistrodon acutus (Hundred-pace snake).